A 264-amino-acid polypeptide reads, in one-letter code: Ribosomal protein L11 methyltransferase (264 aa).

Residues threonine 116, glycine 137, aspartate 159, and asparagine 200 each coordinate S-adenosyl-L-methionine.

Belongs to the methyltransferase superfamily. PrmA family.

The protein localises to the cytoplasm. It catalyses the reaction L-lysyl-[protein] + 3 S-adenosyl-L-methionine = N(6),N(6),N(6)-trimethyl-L-lysyl-[protein] + 3 S-adenosyl-L-homocysteine + 3 H(+). In terms of biological role, methylates ribosomal protein L11. This is Ribosomal protein L11 methyltransferase from Thermotoga neapolitana (strain ATCC 49049 / DSM 4359 / NBRC 107923 / NS-E).